Reading from the N-terminus, the 432-residue chain is GTPase Obg (432 aa).

In terms of domain architecture, Obg spans M1–L158. Residues A159–E335 form the OBG-type G domain. Residues G165–S172, F190–V194, D212–G215, S282–D285, and S316–L318 contribute to the GTP site. Mg(2+) contacts are provided by S172 and T192. The OCT domain maps to T354–E432.

It belongs to the TRAFAC class OBG-HflX-like GTPase superfamily. OBG GTPase family. As to quaternary structure, monomer. It depends on Mg(2+) as a cofactor.

Its subcellular location is the cytoplasm. An essential GTPase which binds GTP, GDP and possibly (p)ppGpp with moderate affinity, with high nucleotide exchange rates and a fairly low GTP hydrolysis rate. Plays a role in control of the cell cycle, stress response, ribosome biogenesis and in those bacteria that undergo differentiation, in morphogenesis control. This chain is GTPase Obg, found in Ligilactobacillus salivarius (strain UCC118) (Lactobacillus salivarius).